Consider the following 438-residue polypeptide: MASKFRLLLENAEQIVVVCTKEEQYLLEDGMQHLAVLEKSSLVIGNDGCIKAVGPAETIRNHFSNASFENIIDCSGKCILPGFVDAHIHPVWAGDRVHEFAMKLAGATYMDIHQAGGGINYTVEHTTAASVEELFCSFKHRLERMLRAGTTLVECKSGYGLKLETELKMLRVIERAHRELDIAVSSTYCGAHSVPKGKSAQEAADDIINNHLPALKQMSLNGEIHVDNIDVFCEKGVFDLESTGRILQAGKAIGLNLNFHGDELNPMNSAELGAELGAHAVSHLEEVSDKGIAALAKAKCSAVLLPTTAYILRLKQPRARDMLKAGVIVSLGSDFNPNAYCFSMPMVMHLACVNMKMSLKEALAAATINAAYALGRAHTHGSLEVGKQGDVVVINASRWEHVIYQFGGHQELIECVVIKGKIVYKNEKFSICRMDLLK.

Residues Tyr159 and His192 each coordinate 4-imidazolone-5-propanoate. An N-formimidoyl-L-glutamate-binding site is contributed by Tyr159. His260 lines the Fe(3+) pocket. A Zn(2+)-binding site is contributed by His260. Glu263 serves as a coordination point for 4-imidazolone-5-propanoate. Residue Asp334 coordinates Fe(3+). Asp334 is a binding site for Zn(2+). Asn336 provides a ligand contact to N-formimidoyl-L-glutamate.

Belongs to the metallo-dependent hydrolases superfamily. HutI family. Requires Zn(2+) as cofactor. Fe(3+) serves as cofactor.

The enzyme catalyses 4-imidazolone-5-propanoate + H2O = N-formimidoyl-L-glutamate. The protein operates within amino-acid degradation; L-histidine degradation into L-glutamate; N-formimidoyl-L-glutamate from L-histidine: step 3/3. The sequence is that of Probable imidazolonepropionase (amdhd1) from Xenopus laevis (African clawed frog).